The following is a 443-amino-acid chain: Multidrug resistance protein MdtA (443 aa).

The first 24 residues, 1–24 (MKAQSKRTSRLLILLGIAVAIIVA), serve as a signal peptide directing secretion. Over residues 36–46 (DGSTGAQQHAV) the composition is skewed to polar residues. Disordered regions lie at residues 36-57 (DGST…GGRR) and 398-443 (TPRS…AEKS). The span at 409 to 419 (AAEKPATAEKA) shows a compositional bias: basic and acidic residues. Residues 427-443 (SATGASAGSTTTAAEKS) show a composition bias toward low complexity.

Belongs to the membrane fusion protein (MFP) (TC 8.A.1) family. In terms of assembly, part of a tripartite efflux system composed of MdtA, MdtB and MdtC.

The protein resides in the cell inner membrane. The protein is Multidrug resistance protein MdtA of Yersinia enterocolitica serotype O:8 / biotype 1B (strain NCTC 13174 / 8081).